The sequence spans 485 residues: Protein nucleotidyltransferase YdiU (485 aa).

ATP contacts are provided by G90, G92, R93, K113, D125, G126, R176, and R183. The Proton acceptor role is filled by D252. Positions 253 and 262 each coordinate Mg(2+). Residue D262 participates in ATP binding.

Belongs to the SELO family. Requires Mg(2+) as cofactor. Mn(2+) serves as cofactor.

The catalysed reaction is L-seryl-[protein] + ATP = 3-O-(5'-adenylyl)-L-seryl-[protein] + diphosphate. It carries out the reaction L-threonyl-[protein] + ATP = 3-O-(5'-adenylyl)-L-threonyl-[protein] + diphosphate. The enzyme catalyses L-tyrosyl-[protein] + ATP = O-(5'-adenylyl)-L-tyrosyl-[protein] + diphosphate. It catalyses the reaction L-histidyl-[protein] + UTP = N(tele)-(5'-uridylyl)-L-histidyl-[protein] + diphosphate. The catalysed reaction is L-seryl-[protein] + UTP = O-(5'-uridylyl)-L-seryl-[protein] + diphosphate. It carries out the reaction L-tyrosyl-[protein] + UTP = O-(5'-uridylyl)-L-tyrosyl-[protein] + diphosphate. Functionally, nucleotidyltransferase involved in the post-translational modification of proteins. It can catalyze the addition of adenosine monophosphate (AMP) or uridine monophosphate (UMP) to a protein, resulting in modifications known as AMPylation and UMPylation. The protein is Protein nucleotidyltransferase YdiU of Vibrio atlanticus (strain LGP32) (Vibrio splendidus (strain Mel32)).